Consider the following 227-residue polypeptide: 2,3-bisphosphoglycerate-dependent phosphoglycerate mutase (227 aa).

Substrate contacts are provided by residues 7 to 14 (RHGFSEWN), 20 to 21 (TG), arginine 59, 86 to 89 (ERHY), lysine 97, 113 to 114 (RR), and 182 to 183 (GN). The Tele-phosphohistidine intermediate role is filled by histidine 8. Glutamate 86 (proton donor/acceptor) is an active-site residue.

Belongs to the phosphoglycerate mutase family. BPG-dependent PGAM subfamily. In terms of assembly, homodimer.

The enzyme catalyses (2R)-2-phosphoglycerate = (2R)-3-phosphoglycerate. Its pathway is carbohydrate degradation; glycolysis; pyruvate from D-glyceraldehyde 3-phosphate: step 3/5. Catalyzes the interconversion of 2-phosphoglycerate and 3-phosphoglycerate. The protein is 2,3-bisphosphoglycerate-dependent phosphoglycerate mutase of Actinobacillus pleuropneumoniae serotype 5b (strain L20).